The primary structure comprises 509 residues: Cytochrome P450 monooxygenase traB (509 aa).

The helical transmembrane segment at 8–28 threads the bilayer; it reads LVELVSITGGLIVLFIAYTGF. Cys-453 is a binding site for heme.

The protein belongs to the cytochrome P450 family. The cofactor is heme.

Its subcellular location is the membrane. The protein operates within secondary metabolite biosynthesis. Cytochrome P450 monooxygenase; part of the tra gene cluster that produces terrestric acid. The clavatol biosynthesis cluster cla and the terrestric acid cluster tra are both involved in the production of peniphenones and penilactones. The non-reducing PKS claF is responsible for the formation of clavatol from successive condensations of 3 malonyl-CoA units, presumably with a simple acetyl-CoA starter unit, and 2 methylation steps. The esterase claE probably collaborates with claF by catalyzing the hydrolysis of ACP-bound acyl intermediates to free the ACP from stalled intermediates. The clavatol oxidase claD then converts clavatol to hydroxyclavatol. Spontaneous dehydration of hydroxyclavatol leads to the accumulation of the highly active ortho-quinone methide. On the other hand, the PKS-NRPS hybrid traA is involved in the formation of crustosic acid, with the help of traB and traD. The polyketide synthase module (PKS) of traA is responsible for the synthesis of the polyketide backbone via the condensation of an acetyl-CoA starter unit with 3 malonyl-CoA units. The downstream nonribosomal peptide synthetase (NRPS) module then amidates the carboxyl end of the polyketide with L-malic acid. Because traA lacks a designated enoylreductase (ER) domain, the required activity is provided the enoyl reductase traG. Crustosic acid undergoes decarboxylation and isomerization to the terrestric acid, catalyzed by the 2-oxoglutarate-dependent dioxygenase traH. Both acids are further converted to the 2 gamma-butyrolactones (R)-5-methyltetronic acid and (S)-5-carboxylmethyltetronic acid, with involvement of the cytochrome P450 monooxygenase claJ. Spontaneous addition of the methide to these gamma-butyrolactones leads to peniphenone D and penilactone D, which undergo again stereospecific attacking by methide to give penilactones A and B. This is Cytochrome P450 monooxygenase traB from Penicillium crustosum (Blue mold fungus).